The sequence spans 402 residues: Multidrug resistance protein MdtH (402 aa).

The Cytoplasmic portion of the chain corresponds to 1 to 12; that stretch reads MSRVSQARNLGK. Residues 13-33 form a helical membrane-spanning segment; sequence YFLLIDNMLVVLVFFVVFPLI. Over 34–98 the chain is Periplasmic; that stretch reads SIRFVDQMGW…GFATMGIAHE (65 aa). A helical membrane pass occupies residues 99–116; the sequence is PWLLWFSCFLSGLGGTLF. Topologically, residues 117-138 are cytoplasmic; sequence DPPRSALVVKLIRPEQRGRFFS. The helical transmembrane segment at 139–159 threads the bilayer; sequence LLMMQDSAGAVIGALLGSWLL. At 160–164 the chain is on the periplasmic side; sequence QYDFR. A helical transmembrane segment spans residues 165 to 185; sequence LVCATGAILFILCALFNAWLL. Over 186 to 213 the chain is Cytoplasmic; sequence PAWKLSTVRTPVREGMRRVMSDKRFVTY. The chain crosses the membrane as a helical span at residues 214–234; the sequence is VLTLAGYYMLAVQVMLMLPIM. Residues 235–243 lie on the Periplasmic side of the membrane; sequence VNDIAGSPA. The chain crosses the membrane as a helical span at residues 244–264; it reads AVKWMYAIEACLSLTLLYPIA. The Cytoplasmic segment spans residues 265 to 276; that stretch reads RWSEKRFRLEHR. Residues 277–297 traverse the membrane as a helical segment; that stretch reads LMAGLLVMSLSMIPIGMVGNL. Over 298-299 the chain is Periplasmic; sequence QQ. A helical membrane pass occupies residues 300–320; sequence LFTLICAFYIGSVIAEPARET. Residues 321–339 are Cytoplasmic-facing; that stretch reads LSASLADARARGSYMGFSR. A helical transmembrane segment spans residues 340–360; sequence LGLAIGGAIGYIGGGWLFDMG. The Periplasmic segment spans residues 361–367; sequence KALTQPE. Residues 368 to 388 form a helical membrane-spanning segment; it reads LPWMMLGIIGFITFLALGWQF. Residues 389 to 402 lie on the Cytoplasmic side of the membrane; the sequence is SHKRTPRRMLEPGA.

The protein belongs to the major facilitator superfamily. DHA1 family. MdtH (TC 2.A.1.2.21) subfamily.

Its subcellular location is the cell inner membrane. The sequence is that of Multidrug resistance protein MdtH from Salmonella choleraesuis (strain SC-B67).